A 141-amino-acid chain; its full sequence is Hemoglobin subunit alpha (141 aa).

A Globin domain is found at 1 to 141 (VLSPADKANI…VSTVLTSKYR (141 aa)). S3 bears the Phosphoserine mark. N6-succinyllysine is present on residues K7 and K11. Position 16 is an N6-acetyllysine; alternate (K16). K16 bears the N6-succinyllysine; alternate mark. Y24 carries the phosphotyrosine modification. S35 carries the phosphoserine modification. K40 carries the post-translational modification N6-succinyllysine. The residue at position 49 (S49) is a Phosphoserine. An O2-binding site is contributed by H58. H87 lines the heme b pocket. S102 carries the phosphoserine modification. T108 is modified (phosphothreonine). 2 positions are modified to phosphoserine: S124 and S131. T134 and T137 each carry phosphothreonine. At S138 the chain carries Phosphoserine.

Belongs to the globin family. Heterotetramer of two alpha chains and two beta chains. In terms of tissue distribution, red blood cells.

Its function is as follows. Involved in oxygen transport from the lung to the various peripheral tissues. In terms of biological role, hemopressin acts as an antagonist peptide of the cannabinoid receptor CNR1. Hemopressin-binding efficiently blocks cannabinoid receptor CNR1 and subsequent signaling. In Meles meles (Eurasian badger), this protein is Hemoglobin subunit alpha (HBA).